Consider the following 517-residue polypeptide: Lysophosphatidylcholine acyltransferase 2B (517 aa).

Asn29 carries N-linked (GlcNAc...) asparagine glycosylation. 3 consecutive transmembrane segments (helical) span residues 70-90, 103-123, and 137-157; these read IVFL…NLPI, LIKP…GFLI, and IFVV…VAGL. Positions 143–148 match the HXXXXD motif motif; sequence HSTFFD. 2 consecutive EF-hand domains span residues 388–423 and 425–460; these read PISE…LCNP and NTEK…AFGV. Positions 401, 403, 405, 407, 412, 438, 440, 442, 444, and 449 each coordinate Ca(2+).

Belongs to the 1-acyl-sn-glycerol-3-phosphate acyltransferase family.

It localises to the membrane. Its pathway is lipid metabolism; phospholipid metabolism. Its function is as follows. Probable acetyltransferase. This chain is Lysophosphatidylcholine acyltransferase 2B (Lpcat2b), found in Rattus norvegicus (Rat).